Reading from the N-terminus, the 420-residue chain is MVSRQEQFEQVQAVKKSINTASEEVKNQALLAMADHLVAATEEILAANALDMAAAKGKISDVMLDRLYLDADRIEAMARGIREVVALPDPIGEVLETSQLENGLVITKKRVAMGVIGIIYESRPNVTSDAAALTLKSGNAVVLRSGKDAYQTTHAIVTALKKGLETTTIHPNVIQLVEDTSRESSYAMMKAKGYLDLLIPRGGAGLINAVVENAIVPVIETGTGIVHVYVDKDADEDKALSIINNAKTSRPSVCNAMEVLLVHENKAASILPRLDQMLVAERKEAGLEPIQFRLDSKASQFVSGQAAETQDFDTEFLDYVLAVKVVSSLEEAVAHIESHSTHHSDAIVTENAEAAAYFTDQVDSAAVYVNASTRFTDGGQFGLGCEMGISTQKLHARGPMGLKELTSYKYVVAGDGQIRE.

This sequence belongs to the gamma-glutamyl phosphate reductase family.

The protein localises to the cytoplasm. It carries out the reaction L-glutamate 5-semialdehyde + phosphate + NADP(+) = L-glutamyl 5-phosphate + NADPH + H(+). It functions in the pathway amino-acid biosynthesis; L-proline biosynthesis; L-glutamate 5-semialdehyde from L-glutamate: step 2/2. Catalyzes the NADPH-dependent reduction of L-glutamate 5-phosphate into L-glutamate 5-semialdehyde and phosphate. The product spontaneously undergoes cyclization to form 1-pyrroline-5-carboxylate. This chain is Gamma-glutamyl phosphate reductase, found in Streptococcus pneumoniae serotype 2 (strain D39 / NCTC 7466).